The primary structure comprises 165 residues: Cyclic pyranopterin monophosphate synthase (165 aa).

Substrate is bound by residues 79–81 and 117–118; these read LCH and ME. Asp-132 is a catalytic residue.

The protein belongs to the MoaC family. In terms of assembly, homohexamer; trimer of dimers.

The enzyme catalyses (8S)-3',8-cyclo-7,8-dihydroguanosine 5'-triphosphate = cyclic pyranopterin phosphate + diphosphate. It functions in the pathway cofactor biosynthesis; molybdopterin biosynthesis. In terms of biological role, catalyzes the conversion of (8S)-3',8-cyclo-7,8-dihydroguanosine 5'-triphosphate to cyclic pyranopterin monophosphate (cPMP). This chain is Cyclic pyranopterin monophosphate synthase, found in Chloroflexus aggregans (strain MD-66 / DSM 9485).